We begin with the raw amino-acid sequence, 156 residues long: Small ribosomal subunit protein uS7 (156 aa).

The protein belongs to the universal ribosomal protein uS7 family. Part of the 30S ribosomal subunit. Contacts proteins S9 and S11.

Its function is as follows. One of the primary rRNA binding proteins, it binds directly to 16S rRNA where it nucleates assembly of the head domain of the 30S subunit. Is located at the subunit interface close to the decoding center, probably blocks exit of the E-site tRNA. The sequence is that of Small ribosomal subunit protein uS7 from Bacillus pumilus (strain SAFR-032).